A 622-amino-acid chain; its full sequence is MSNIVLNTLRFKHPKLALLQSCSSFSDLKIIHGFLLRTHLISDVFVASRLLALCVDDSTFNKPTNLLGYAYGIFSQIQNPNLFVFNLLIRCFSTGAEPSKAFGFYTQMLKSRIWPDNITFPFLIKASSEMECVLVGEQTHSQIVRFGFQNDVYVENSLVHMYANCGFIAAAGRIFGQMGFRDVVSWTSMVAGYCKCGMVENAREMFDEMPHRNLFTWSIMINGYAKNNCFEKAIDLFEFMKREGVVANETVMVSVISSCAHLGALEFGERAYEYVVKSHMTVNLILGTALVDMFWRCGDIEKAIHVFEGLPETDSLSWSSIIKGLAVHGHAHKAMHYFSQMISLGFIPRDVTFTAVLSACSHGGLVEKGLEIYENMKKDHGIEPRLEHYGCIVDMLGRAGKLAEAENFILKMHVKPNAPILGALLGACKIYKNTEVAERVGNMLIKVKPEHSGYYVLLSNIYACAGQWDKIESLRDMMKEKLVKKPPGWSLIEIDGKINKFTMGDDQKHPEMGKIRRKWEEILGKIRLIGYKGNTGDAFFDVDEEEKESSIHMHSEKLAIAYGMMKTKPGTTIRIVKNLRVCEDCHTVTKLISEVYGRELIVRDRNRFHHFRNGVCSCRDYW.

PPR repeat units lie at residues 81-115 (NLFVFNLLIRCFSTGAEPSKAFGFYTQMLKSRIWP), 116-150 (DNITFPFLIKASSEMECVLVGEQTHSQIVRFGFQN), 151-181 (DVYVENSLVHMYANCGFIAAAGRIFGQMGFR), 182-212 (DVVSWTSMVAGYCKCGMVENAREMFDEMPHR), 213-247 (NLFTWSIMINGYAKNNCFEKAIDLFEFMKREGVVA), 248-282 (NETVMVSVISSCAHLGALEFGERAYEYVVKSHMTV), 283-313 (NLILGTALVDMFWRCGDIEKAIHVFEGLPET), 314-348 (DSLSWSSIIKGLAVHGHAHKAMHYFSQMISLGFIP), 349-384 (RDVTFTAVLSACSHGGLVEKGLEIYENMKKDHGIEP), and 385-419 (RLEHYGCIVDMLGRAGKLAEAENFILKMHVKPNAP). The segment at 420 to 495 (ILGALLGACK…PPGWSLIEID (76 aa)) is type E motif. Positions 496 to 527 (GKINKFTMGDDQKHPEMGKIRRKWEEILGKIR) are type E(+) motif. The type DYW motif stretch occupies residues 528–622 (LIGYKGNTGD…NGVCSCRDYW (95 aa)).

This sequence belongs to the PPR family. PCMP-H subfamily.

This Arabidopsis thaliana (Mouse-ear cress) protein is Pentatricopeptide repeat-containing protein At5g06540 (PCMP-H88).